Here is a 197-residue protein sequence, read N- to C-terminus: TATA-box-binding protein (197 aa).

A run of 2 repeats spans residues 10 to 86 (IENI…VKLL) and 101 to 177 (IQNI…YNQL).

It belongs to the TBP family.

Functionally, general factor that plays a role in the activation of archaeal genes transcribed by RNA polymerase. Binds specifically to the TATA box promoter element which lies close to the position of transcription initiation. In Pyrobaculum neutrophilum (strain DSM 2338 / JCM 9278 / NBRC 100436 / V24Sta) (Thermoproteus neutrophilus), this protein is TATA-box-binding protein.